We begin with the raw amino-acid sequence, 338 residues long: Phosphatidylinositol:ceramide inositolphosphotransferase (338 aa).

Topologically, residues 1–36 are cytoplasmic; the sequence is MTSHVTAHDVGGNEDIGTDHVPWYKQPLPLCTQVMR. A helical membrane pass occupies residues 37 to 57; sequence FILLLLLTVMFLGVAILVANA. At 58–87 the chain is on the extracellular side; the sequence is RMPDPEKVRPLPDLLLESIPKVALLENGTN. A helical membrane pass occupies residues 88–108; that stretch reads VIIFLLNATTVVVGFKVFLLE. At 109 to 116 the chain is on the cytoplasmic side; the sequence is RHMNGLPR. Residues 117–137 form a helical membrane-spanning segment; it reads VTFLVGVPKIGSFLNRMAFGV. Topologically, residues 138-152 are extracellular; sequence LDSGRRPFPLKNVFP. A helical membrane pass occupies residues 153–173; sequence IMAIRFLTSYAVVMVFRAFVI. Topologically, residues 174-189 are cytoplasmic; it reads MGTSYPATDNHCQNPQ. Residues 190-210 form a helical membrane-spanning segment; sequence VIEHPVLNVILTLVTLGSGAI. Over 211–222 the chain is Extracellular; sequence HCGDLMFSGHTM. H220 is an active-site residue. Residues 223–243 traverse the membrane as a helical segment; it reads ILSLAFILAWDYSPFLHPWAV. Residues 244–338 lie on the Cytoplasmic side of the membrane; sequence RVWVSVLLPI…TDASAALPEH (95 aa). Catalysis depends on residues H264 and D268.

It belongs to the sphingomyelin synthase family.

The protein localises to the membrane. Its function is as follows. Bidirectional lipid inositolphosphotransferase capable of converting phosphatidylinositol (PI) and ceramide to inositol-phosphorylceramide (IPC) and diacylglycerol (DAG) and vice versa. Direction is dependent on the relative concentrations of DAG and ceramide as phosphoinositol acceptors. Essential for viability of the pathogenic bloodstream stage of this human protozoan parasite and, consequently, can be considered as potential drug target. The protein is Phosphatidylinositol:ceramide inositolphosphotransferase of Leishmania major.